Consider the following 1495-residue polypeptide: ABC transporter C family member 12 (1495 aa).

11 helical membrane-spanning segments follow: residues 38–58, 76–96, 110–130, 146–166, 173–195, 303–323, 337–357, 420–440, 441–461, 528–548, and 558–578; these read VMLV…WIIF, VLGL…VMGI, FEVA…VLIG, FGVL…LPLK, ALYL…LIYI, FWLA…GPVI, AWVG…GVLC, GLWS…QQLG, VASL…TLII, FILN…FVLL, and FTSL…PNLL. Residues 303-583 form the ABC transmembrane type-1 1 domain; it reads FWLAGIFKIG…LPNLLSQVVN (281 aa). The region spanning 615–839 is the ABC transporter 1 domain; that stretch reads ISIKNGYFSW…GILFKKLMEN (225 aa). 650 to 657 serves as a coordination point for ATP; that stretch reads GGTGEGKT. The next 5 membrane-spanning stretches (helical) occupy residues 907 to 927, 949 to 969, 1042 to 1062, 1140 to 1160, and 1166 to 1186; these read AVGG…TEVL, PGFY…VTFT, FALI…LLIL, LETL…LQNG, and AGFA…TSLL. In terms of domain architecture, ABC transmembrane type-1 2 spans 914–1198; that stretch reads VMILLACYLA…VLRQASRAEN (285 aa). An ABC transporter 2 domain is found at 1235-1469; sequence IKFEDVHLRY…DTSAFFRMVH (235 aa). 1269-1276 provides a ligand contact to ATP; sequence GRTGAGKS.

The protein belongs to the ABC transporter superfamily. ABCC family. Conjugate transporter (TC 3.A.1.208) subfamily. Ubiquitous.

The protein localises to the membrane. It carries out the reaction ATP + H2O + xenobioticSide 1 = ADP + phosphate + xenobioticSide 2.. Functionally, pump for glutathione S-conjugates. The protein is ABC transporter C family member 12 (ABCC12) of Arabidopsis thaliana (Mouse-ear cress).